A 106-amino-acid chain; its full sequence is MICOS complex subunit MIC12 (106 aa).

The helical transmembrane segment at 11 to 27 (VKWTLSVGVIGSVFYLY) threads the bilayer.

The protein belongs to the MICOS complex subunit Mic12 family. As to quaternary structure, component of the mitochondrial contact site and cristae organizing system (MICOS) complex.

The protein localises to the mitochondrion inner membrane. In terms of biological role, component of the MICOS complex, a large protein complex of the mitochondrial inner membrane that plays crucial roles in the maintenance of crista junctions, inner membrane architecture, and formation of contact sites to the outer membrane. In Saccharomyces cerevisiae (strain RM11-1a) (Baker's yeast), this protein is MICOS complex subunit MIC12 (AIM5).